The chain runs to 389 residues: PqqA peptide cyclase (389 aa).

The region spanning 19 to 235 (VGLPLWLLAE…NEYRVRLEAE (217 aa)) is the Radical SAM core domain. [4Fe-4S] cluster is bound by residues C33, C37, and C40.

This sequence belongs to the radical SAM superfamily. PqqE family. In terms of assembly, interacts with PqqD. The interaction is necessary for activity of PqqE. [4Fe-4S] cluster serves as cofactor.

The enzyme catalyses [PQQ precursor protein] + S-adenosyl-L-methionine = E-Y cross-linked-[PQQ precursor protein] + 5'-deoxyadenosine + L-methionine + H(+). The protein operates within cofactor biosynthesis; pyrroloquinoline quinone biosynthesis. Its function is as follows. Catalyzes the cross-linking of a glutamate residue and a tyrosine residue in the PqqA protein as part of the biosynthesis of pyrroloquinoline quinone (PQQ). In Pseudomonas savastanoi pv. phaseolicola (strain 1448A / Race 6) (Pseudomonas syringae pv. phaseolicola (strain 1448A / Race 6)), this protein is PqqA peptide cyclase.